The chain runs to 164 residues: UPF0304 protein YfbU (164 aa).

This sequence belongs to the UPF0304 family.

The protein is UPF0304 protein YfbU of Salmonella enteritidis PT4 (strain P125109).